The following is a 337-amino-acid chain: 2-oxoglutarate receptor 1 (337 aa).

Over 1-38 (MIEPLDSPASDSDFLDYPSALGNCTDEQISFKMQYLPV) the chain is Extracellular. A glycan (N-linked (GlcNAc...) asparagine) is linked at Asn23. A helical membrane pass occupies residues 39–59 (IYSIIFLVGFPGNTVAISIYI). At 60-69 (FKMRPWRGST) the chain is on the cytoplasmic side. Residues 70 to 90 (VIMLNLALTDLLYLTSLPFLI) traverse the membrane as a helical segment. The Extracellular portion of the chain corresponds to 91–116 (HYYASGENWIFGDFMCKFIRFGFHFN). A disulfide bridge links Cys106 with Cys183. The helical transmembrane segment at 117-137 (LYSSILFLTCFSLFRYVVIIH) threads the bilayer. The Cytoplasmic portion of the chain corresponds to 138-151 (PMSCFSIQKTRWAV). The helical transmembrane segment at 152-172 (VACAGVWVISLVAVMPMTFLI) threads the bilayer. Residues 173–200 (TSTTRTNRSACLDLTSSDDLTTIKWYNL) lie on the Extracellular side of the membrane. A helical membrane pass occupies residues 201–221 (ILTATTFCLPLVIVTLCYTTI). Residues 222–242 (ISTLTHGPRTHSCFKQKARRL) are Cytoplasmic-facing. The helical transmembrane segment at 243–263 (TILLLLVFYICFLPFHILRVI) threads the bilayer. The Extracellular segment spans residues 264 to 284 (RIESRLLSISCSIESHIHEAY). Residues 285 to 305 (IVSRPLAALNTFGNLLLYVVV) form a helical membrane-spanning segment. Topologically, residues 306-337 (SNNFQQAFCSIVRCKASGDLEQGKKDSCSNNP) are cytoplasmic.

Belongs to the G-protein coupled receptor 1 family. As to expression, predominantly expressed in the kidney with limited expression in the testis and the smooth muscle. Expressed in SLC26A4/pendrin-positive type B and non-A non-B intercalated cells (at protein level).

The protein resides in the cell membrane. G protein-coupled receptor for dicarboxylates and amino dicarboxylates. Receptor for itaconate produced by activated macrophages upon bacterial infection. In the respiratory epithelium, couples the binding of itaconate to the activation of GNA11 and downstream intracellular Ca(2+) release, leading to mucocilliary clearance of airborne pathogens. Receptor for leukotriene E4 (LTE4) produced by mast cells upon allergic inflammation. Binds with high affinity to LTE4 and elicits mucin release from pulmonary epithelium in response to airborne fungi allergens. Regulates mucin-producing goblet cell homeostasis. Receptor for alpha-ketoglutarate produced by proximal tubule renal cells upon metabolic alkalosis. In an intrarenal paracrine signaling pathway, binds alpha-ketoglutarate and drives transepithelial salt reabsorption and bicarbonate secretion by SLC26A4/pendrin-positive intercalated cells. This is 2-oxoglutarate receptor 1 (Oxgr1) from Mus musculus (Mouse).